Here is a 303-residue protein sequence, read N- to C-terminus: Protoheme IX farnesyltransferase (303 aa).

The next 6 helical transmembrane spans lie at 25–45 (MGLV…AIVM), 54–74 (IPQI…ACAL), 118–138 (CLFL…VGYV), 166–186 (IGWV…FLVV), 230–250 (LVLL…FVVI), and 280–300 (FVYS…VSLI).

It belongs to the UbiA prenyltransferase family. Protoheme IX farnesyltransferase subfamily. As to quaternary structure, interacts with CtaA.

The protein resides in the cell membrane. The enzyme catalyses heme b + (2E,6E)-farnesyl diphosphate + H2O = Fe(II)-heme o + diphosphate. It functions in the pathway porphyrin-containing compound metabolism; heme O biosynthesis; heme O from protoheme: step 1/1. Functionally, converts heme B (protoheme IX) to heme O by substitution of the vinyl group on carbon 2 of heme B porphyrin ring with a hydroxyethyl farnesyl side group. This Staphylococcus epidermidis (strain ATCC 35984 / DSM 28319 / BCRC 17069 / CCUG 31568 / BM 3577 / RP62A) protein is Protoheme IX farnesyltransferase.